Consider the following 457-residue polypeptide: Multidrug resistance protein MdtK (457 aa).

Topologically, residues 1–10 (MQKYISEARL) are cytoplasmic. The chain crosses the membrane as a helical span at residues 11–31 (LLALAIPVILAQIAQTAMGFV). At 32–52 (DTVMAGGYSATDMAAVAIGTS) the chain is on the periplasmic side. The chain crosses the membrane as a helical span at residues 53–73 (IWLPAILFGHGLLLALTPVIA). Residues 74–92 (QLNGSGRRERIAHQVRQGF) lie on the Cytoplasmic side of the membrane. The helical transmembrane segment at 93 to 113 (WLAGFVSVLIMLVLWNAGYII) threads the bilayer. Residues 114-126 (RSMENIDPALADK) are Periplasmic-facing. The chain crosses the membrane as a helical span at residues 127 to 147 (AVGYLRALLWGAPGYLFFQVA). Residues 148 to 159 (RNQCEGLAKTKP) lie on the Cytoplasmic side of the membrane. The chain crosses the membrane as a helical span at residues 160 to 180 (GMVMGFIGLLVNIPVNYIFIY). The Periplasmic segment spans residues 181 to 191 (GHFGMPELSGV). Residues 192–212 (GCGVATAAVYWAMFLAMVSYI) form a helical membrane-spanning segment. The Cytoplasmic portion of the chain corresponds to 213–242 (KRARSMRDIRNEKGTAKPDPAVMKRLIQLG). A helical transmembrane segment spans residues 243–263 (LPIALALFFEVTLFAVVALLV). At 264–275 (SPLGIVDVAGHQ) the chain is on the periplasmic side. Residues 276 to 296 (IALNFSSLMFVLPMSLAAAVT) form a helical membrane-spanning segment. Over 297–313 (IRVGYRLGQGSTLDAQT) the chain is Cytoplasmic. A helical transmembrane segment spans residues 314 to 334 (AARTGLMVGVCMATLTAIFTV). The Periplasmic portion of the chain corresponds to 335 to 349 (SLREQIALLYNDNPE). Residues 350-370 (VVTLAAHLMLLAAVYQISDSI) traverse the membrane as a helical segment. Residues 371–386 (QVIGSGILRGYKDTRS) are Cytoplasmic-facing. A helical transmembrane segment spans residues 387 to 407 (IFYITFTAYWVLGLPSGYILA). Topologically, residues 408-417 (LTDLVVEPMG) are periplasmic. A helical transmembrane segment spans residues 418–438 (PAGFWIGFIIGLTSAAIMMML). Residues 439-457 (RMRFLQRLPSAIILQRASR) lie on the Cytoplasmic side of the membrane.

Belongs to the multi antimicrobial extrusion (MATE) (TC 2.A.66.1) family. MdtK subfamily.

It is found in the cell inner membrane. Functionally, multidrug efflux pump that functions probably as a Na(+)/drug antiporter. In Shigella dysenteriae serotype 1 (strain Sd197), this protein is Multidrug resistance protein MdtK.